The following is a 248-amino-acid chain: Triosephosphate isomerase (248 aa).

9–11 contacts substrate; it reads NWK. Histidine 94 (electrophile) is an active-site residue. The active-site Proton acceptor is glutamate 166. Substrate is bound by residues glycine 172, serine 212, and 233-234; that span reads GG.

This sequence belongs to the triosephosphate isomerase family. Homodimer.

The protein localises to the cytoplasm. It catalyses the reaction D-glyceraldehyde 3-phosphate = dihydroxyacetone phosphate. Its pathway is carbohydrate biosynthesis; gluconeogenesis. The protein operates within carbohydrate degradation; glycolysis; D-glyceraldehyde 3-phosphate from glycerone phosphate: step 1/1. Functionally, involved in the gluconeogenesis. Catalyzes stereospecifically the conversion of dihydroxyacetone phosphate (DHAP) to D-glyceraldehyde-3-phosphate (G3P). In Clostridium botulinum (strain Eklund 17B / Type B), this protein is Triosephosphate isomerase.